Consider the following 265-residue polypeptide: 3-methyl-2-oxobutanoate hydroxymethyltransferase (265 aa).

Mg(2+) contacts are provided by Asp-44 and Asp-83. 3-methyl-2-oxobutanoate-binding positions include 44 to 45 (DS), Asp-83, and Lys-113. Glu-115 is a binding site for Mg(2+). Catalysis depends on Glu-183, which acts as the Proton acceptor.

The protein belongs to the PanB family. As to quaternary structure, homodecamer; pentamer of dimers. The cofactor is Mg(2+).

The protein resides in the cytoplasm. The catalysed reaction is 3-methyl-2-oxobutanoate + (6R)-5,10-methylene-5,6,7,8-tetrahydrofolate + H2O = 2-dehydropantoate + (6S)-5,6,7,8-tetrahydrofolate. It participates in cofactor biosynthesis; (R)-pantothenate biosynthesis; (R)-pantoate from 3-methyl-2-oxobutanoate: step 1/2. Catalyzes the reversible reaction in which hydroxymethyl group from 5,10-methylenetetrahydrofolate is transferred onto alpha-ketoisovalerate to form ketopantoate. The chain is 3-methyl-2-oxobutanoate hydroxymethyltransferase from Leptospira borgpetersenii serovar Hardjo-bovis (strain JB197).